The sequence spans 334 residues: Tetratricopeptide repeat protein 24 (334 aa).

4 TPR repeats span residues 35 to 68 (GPFY…CRQP), 72 to 105 (ATVL…HGSV), 112 to 145 (GRSF…AQDT), and 152 to 185 (WQAC…CQHE). The tract at residues 220 to 258 (PGKLQTSRKAKTSARVQSSAEDAQESQWEGEASEGGHEK) is disordered. A compositionally biased stretch (polar residues) spans 233–246 (ARVQSSAEDAQESQ).

This Mus musculus (Mouse) protein is Tetratricopeptide repeat protein 24 (Ttc24).